Consider the following 248-residue polypeptide: Cutinase (248 aa).

A signal peptide spans 1 to 17; that stretch reads MRSLAILTTLLAGHAFA. The propeptide occupies 18-28; the sequence is YPKPAPQSVNR. A lid covering the active site of the uncomplexed enzyme region spans residues 31–70; that stretch reads WPSINEFLSELAKVMPIGDTITAACDLISDGEDAAASLFG. Disulfide bonds link C55/C91 and C79/C153. The active-site Nucleophile is S164. Cysteines 212 and 219 form a disulfide. The active site involves D216. The active-site Proton donor/acceptor is the H229.

The protein belongs to the cutinase family.

The protein resides in the secreted. It catalyses the reaction cutin + H2O = cutin monomers.. Its activity is regulated as follows. Weakly inhibited by n-undecyl phosphonate (C11Y4). Activity unaffected by paraoxon. In terms of biological role, catalyzes the hydrolysis of complex carboxylic polyesters found in the cell wall of plants. Degrades cutin, a macromolecule that forms the structure of the plant cuticle. The sequence is that of Cutinase from Hypocrea jecorina (strain QM6a) (Trichoderma reesei).